The sequence spans 210 residues: Chaperone protein TorD (210 aa).

Belongs to the TorD/DmsD family. TorD subfamily.

The protein resides in the cytoplasm. In terms of biological role, involved in the biogenesis of TorA. Acts on TorA before the insertion of the molybdenum cofactor and, as a result, probably favors a conformation of the apoenzyme that is competent for acquiring the cofactor. The polypeptide is Chaperone protein TorD (Salmonella agona (strain SL483)).